The chain runs to 406 residues: Tubby-like F-box protein 3 (406 aa).

Positions 50-105 constitute an F-box domain; that stretch reads SCWASMPPELLRDVLMRIEQSEDTWPSRKNVVSCAGVCRNWREIVKEIVRVPELSS.

Belongs to the TUB family. In terms of tissue distribution, ubiquitous at low levels. Not detected in mature siliques.

Its subcellular location is the cell membrane. The protein localises to the plastid. It localises to the nucleus. It is found in the nucleoplasm. The protein resides in the cytoplasm. Involved in abiotic stress signaling. Tethered to plasma membrane (PM) and probably bound to phosphatidylinositol 4,5-bisphosphate. Abiotic stresses (drought, salt, H(2)O(2)) trigger phospholipase C mediated PM dislogement and plastidial and nucleocytosolic relocation of TULP3. The polypeptide is Tubby-like F-box protein 3 (Arabidopsis thaliana (Mouse-ear cress)).